Consider the following 212-residue polypeptide: Redox-sensing transcriptional repressor Rex (212 aa).

The segment at residues 17 to 56 (LYARSLRYLLEEGIHSVSSQELGERINVTAAQIRKDLSYF) is a DNA-binding region (H-T-H motif). 91-96 (GIGLLG) lines the NAD(+) pocket.

The protein belongs to the transcriptional regulatory Rex family. Homodimer.

The protein localises to the cytoplasm. Modulates transcription in response to changes in cellular NADH/NAD(+) redox state. This is Redox-sensing transcriptional repressor Rex from Chloroflexus aggregans (strain MD-66 / DSM 9485).